The primary structure comprises 92 residues: Conotoxin Ac8.1 (92 aa).

The signal sequence occupies residues 1 to 19; that stretch reads LKMGAMFVLLLLFTLASSQ. Residues 20–44 constitute a propeptide that is removed on maturation; sequence QEGDVQARKTSLKSDFYRALRQYDR. A Pyrrolidone carboxylic acid modification is found at Gln-45.

It belongs to the conotoxin S superfamily. In terms of processing, contains 5 disulfide bonds. In terms of tissue distribution, expressed by the venom duct.

It is found in the secreted. The polypeptide is Conotoxin Ac8.1 (Conus achatinus (Little frog cone)).